Consider the following 93-residue polypeptide: Alpha-defensin 21 (93 aa).

Residues 1-19 (MKTLVLLSALILLAYQVQT) form the signal peptide. The propeptide occupies 20 to 58 (DPIQNTDEETNTEEQPGEDDQAVSVSFGGQEGSALHEKL). A disordered region spans residues 22–43 (IQNTDEETNTEEQPGEDDQAVS). A compositionally biased stretch (acidic residues) spans 25 to 40 (TDEETNTEEQPGEDDQ). Disulfide bonds link C64/C89, C66/C81, and C71/C88.

This sequence belongs to the alpha-defensin family.

Its subcellular location is the secreted. Functionally, may have microbicidal activities. The polypeptide is Alpha-defensin 21 (Defa21) (Mus musculus (Mouse)).